The sequence spans 358 residues: SPbeta prophage-derived probable integrase/recombinase YopP (358 aa).

The Core-binding (CB) domain occupies 23 to 114 (NKDIRSSSGN…SLKMLYTYLE (92 aa)). One can recognise a Tyr recombinase domain in the interval 137-319 (KNWDKTTQTE…NIANSAGVTM (183 aa)). Catalysis depends on residues Arg-178, Lys-206, His-268, and His-295. Tyr-304 serves as the catalytic O-(3'-phospho-DNA)-tyrosine intermediate.

This sequence belongs to the 'phage' integrase family.

Functionally, probable recombinase that does not seem to have a role in chromosome dimer resolution per se but rather may have some facilitative role during chromosome partitioning in general. The sequence is that of SPbeta prophage-derived probable integrase/recombinase YopP (yopP) from Bacillus subtilis (strain 168).